A 479-amino-acid chain; its full sequence is MARLNESTASSEPIEILKRRFVRQNREIARVNSIQSLRIRSLESEVSNLLSENVSLREQIITLTQELERFEAARTLHDGVYDVKARLDSKLVELGNLITELGSLPRRYSRAVRENGEPAPARQSRESGPKEVDDTDPEPNLGFLDGRLPVIMEDKLYPRRTLTAQEVQELRDSDTDGPNCSGFEDSSISPKQRVEYDEAATGGPAYFIDTNTIVEEIENEHSLPPNLETRRKKKIGPATVNKDQADTRPISLLDSKFTRKCGAKRKFSAEDDESLFESSPSEDDEFQFSRPAQSPKLFSQNEHASADDGSGELRRPIQSPTLSSQNDHSPVKMKPQSERSIAHVHGERRVLEPKSTNTNILSPAKPSIMKDYNQNHDFGYNEKSEKPLPRQGKGAVDGSKNASPKKSSTRTPVFGNDGNKSGNKQKKSGAIKSNTPSLDGIEDSEIATTADMPSTRPSRRRGTVSQPESHKTEGISMPP.

Positions 36–76 form a coiled coil; it reads SLRIRSLESEVSNLLSENVSLREQIITLTQELERFEAARTL. Disordered regions lie at residues 109–145, 220–247, and 263–479; these read SRAVRENGEPAPARQSRESGPKEVDDTDPEPNLGFLD, EHSLPPNLETRRKKKIGPATVNKDQADT, and AKRK…SMPP. The segment covering 123–132 has biased composition (basic and acidic residues); the sequence is QSRESGPKEV. Residues 270-286 show a composition bias toward acidic residues; it reads EDDESLFESSPSEDDEF. 2 stretches are compositionally biased toward polar residues: residues 290-303 and 318-328; these read RPAQSPKLFSQNEH and QSPTLSSQNDH. 2 stretches are compositionally biased toward basic and acidic residues: residues 335–352 and 379–388; these read PQSERSIAHVHGERRVLE and GYNEKSEKPL. Positions 400–411 are enriched in polar residues; sequence KNASPKKSSTRT.

It belongs to the shugoshin family.

Its subcellular location is the nucleus. It localises to the chromosome. The protein resides in the centromere. Its function is as follows. Plays a central role in chromosome cohesion during cell division by preventing premature dissociation of cohesin complex from centromeres after prophase, when most of cohesin complex dissociates from chromosomes arms. This is Shugoshin (sgo1) from Emericella nidulans (strain FGSC A4 / ATCC 38163 / CBS 112.46 / NRRL 194 / M139) (Aspergillus nidulans).